The chain runs to 429 residues: Zinc finger protein 385C (429 aa).

The Matrin-type 1 zinc-finger motif lies at 77–107 (ISCNICHLRFNSANQAEAHYKGHRHARKLKA). Disordered stretches follow at residues 109 to 224 (EAAK…GRGE), 258 to 295 (GHQGAPRRGRGRPVSRGGTGHKTKRVIGNRGGRQGPSP), and 311 to 340 (QLKQHMSSRRHKDRLAGKPPKSSSQHNKLQ). Residues 125 to 146 (TVVSSASPPASGSPGTPQSKGP) are compositionally biased toward low complexity. Pro residues predominate over residues 147–162 (ASPPLGPSLQLPPTPD). Residues 181 to 193 (CDAAASSSSSSCP) are compositionally biased toward low complexity. The Matrin-type 2 zinc-finger motif lies at 225 to 259 (KGRLYCPTCKVTVNSASQLQAHNTGAKHRWMVEGH). Over residues 262–284 (APRRGRGRPVSRGGTGHKTKRVI) the composition is skewed to basic residues. The segment at 297-327 (FHCALCQLHVNSETQLKQHMSSRRHKDRLAG) adopts a Matrin-type 3 zinc-finger fold.

The protein localises to the nucleus. This chain is Zinc finger protein 385C, found in Mus musculus (Mouse).